A 465-amino-acid chain; its full sequence is UPF0324 membrane protein CC_0425 (465 aa).

The disordered stretch occupies residues 97-132 (HRQPDRAPPARASEQPLRQGRRALRRRPDQRRHRPR). Basic residues predominate over residues 115-132 (QGRRALRRRPDQRRHRPR). A run of 10 helical transmembrane segments spans residues 135–157 (AAAL…LMAV), 172–194 (LLAV…GAGL), 219–241 (AALG…GIGA), 251–273 (LAEA…LAAS), 286–308 (TALV…PPIA), 318–340 (AGVF…ASVS), 352–374 (LSRI…RTAQ), 378–400 (ISGL…ARGL), 405–427 (PALV…GAIS), and 442–464 (LAIL…TRIF).

It belongs to the UPF0324 family.

It is found in the cell membrane. This chain is UPF0324 membrane protein CC_0425, found in Caulobacter vibrioides (strain ATCC 19089 / CIP 103742 / CB 15) (Caulobacter crescentus).